The primary structure comprises 150 residues: Large ribosomal subunit protein uL22c (150 aa).

This sequence belongs to the universal ribosomal protein uL22 family. As to quaternary structure, part of the 50S ribosomal subunit.

The protein resides in the plastid. It localises to the chloroplast. This protein binds specifically to 23S rRNA. In terms of biological role, the globular domain of the protein is located near the polypeptide exit tunnel on the outside of the subunit, while an extended beta-hairpin is found that lines the wall of the exit tunnel in the center of the 70S ribosome. The chain is Large ribosomal subunit protein uL22c (rpl22) from Fagopyrum esculentum subsp. ancestrale (Wild buckwheat).